Reading from the N-terminus, the 528-residue chain is MRTGQQYLESLRDGRQVYVGGELIDDVTTHPKTSGYAKAIAEYYDLHLDPEHQDVLTFVDDDGVRKSMHWFLPRSKADAARRRAYHEFWFRHFQGGIFTRPPAGMHVVMYAQIDDPEPWGDNAVVAGGRTISFADNIRSQWQRVTTDDVALSPMFVDVQFDRGRDDALVETPMLSIVEQNDQGIVVRGWKAMGTSLPFVNELLVGNLWRPGQTSDQTVYAIVPVNTPGLSLVCRQSNATPDADPYDHPLSTIGDELDGMAYFDDVFIPWENVQHIGNPDHAKWYPQRQFDWVHIETQIRHAVHAELIVGLALLLTNALGTNNNPIVQSQLADLVRFRETCKAFAIAAEETGFTTAGGLFKPNNIYVDLGRAHYLENIHNAVNQLIEFCGRGVVMSPTKADFDHPFLGPKLEEALRGTSISARDRVSIFRQISERYLTQWGARHEMFEKFNGTPLYLVRLLTMQRTEYQVDGPLTDLARQVLGFGDTEALAARAAEVEKNSNWASVAYQPEYAREQDVRDGYYKETEKV.

Residue 100-104 (RPPAG) coordinates substrate. Residues 153–155 (PMF), 159–162 (QFDR), and threonine 194 contribute to the FAD site. 205 to 206 (GN) lines the substrate pocket. Residue 461–464 (TMQR) coordinates FAD.

Belongs to the FADH(2)-utilizing monooxygenase family. As to quaternary structure, the 4-NP/4-NCA monooxygenase is composed of an oxygenase component NpcA and a reductase component NpcB. FAD is required as a cofactor.

The catalysed reaction is 4-nitrophenol + NADH + O2 + H(+) = 4-nitrocatechol + NAD(+) + H2O. It catalyses the reaction 4-nitrocatechol + NADPH + O2 = 2-hydroxy-1,4-benzoquinone + nitrite + NADP(+) + H2O. It carries out the reaction 4-nitrocatechol + NADH + O2 = 2-hydroxy-1,4-benzoquinone + nitrite + NAD(+) + H2O. Its pathway is aromatic compound metabolism. The protein operates within xenobiotic degradation. With respect to regulation, inhibited by methimazole. Functionally, involved in the degradation of para-nitrophenol (4-NP). Catalyzes both the initial hydroxylation of 4-NP to produce 4-nitrocatechol (4-NCA) and the subsequent oxidative release of the nitro group from 4-NCA to produce 2-hydroxy-1,4-benzoquinone. It can also use 4-nitroresorcinol as substrate with a rate of nitrite release similar to that observed with the two physiological substrates, 4-PN and 4-NCA. The protein is 4-nitrophenol 4-monooxygenase/4-nitrocatechol 2-monooxygenase, oxygenase component (npcA) of Rhodococcus opacus (Nocardia opaca).